A 252-amino-acid polypeptide reads, in one-letter code: 3-dehydroquinate dehydratase (252 aa).

3-dehydroquinate-binding positions include Ser21, 46–48 (EWR), and Arg82. His143 (proton donor/acceptor) is an active-site residue. The Schiff-base intermediate with substrate role is filled by Lys170. 3-dehydroquinate contacts are provided by Arg213, Ser232, and Gln236.

Belongs to the type-I 3-dehydroquinase family. In terms of assembly, homodimer.

It carries out the reaction 3-dehydroquinate = 3-dehydroshikimate + H2O. It participates in metabolic intermediate biosynthesis; chorismate biosynthesis; chorismate from D-erythrose 4-phosphate and phosphoenolpyruvate: step 3/7. Functionally, involved in the third step of the chorismate pathway, which leads to the biosynthesis of aromatic amino acids. Catalyzes the cis-dehydration of 3-dehydroquinate (DHQ) and introduces the first double bond of the aromatic ring to yield 3-dehydroshikimate. The sequence is that of 3-dehydroquinate dehydratase from Escherichia coli O8 (strain IAI1).